The chain runs to 1555 residues: Phospholipid-transporting ATPase DNF1 (1555 aa).

The interval 1–85 (MAPPQEEGGG…SSNNGGSAPR (85 aa)) is disordered. The Cytoplasmic segment spans residues 1-134 (MAPPQEEGGG…PKNLWFQFHN (134 aa)). Over residues 22–37 (WATRRLTVKSGARKRL) the composition is skewed to basic residues. The segment covering 72–82 (GSISSSNNGGS) has biased composition (low complexity). A helical transmembrane segment spans residues 135-155 (IANIFFLFLVILVIFPIFGGV). Asn-156 is a topological domain (extracellular). A helical membrane pass occupies residues 157–177 (PGLNSVPLIVIITVTAIKDAI). The Cytoplasmic portion of the chain corresponds to 178 to 491 (EDYRRTILDI…ARIARELNFN (314 aa)). Residues 257–288 (TRTAPWDPSHRRSVASHTEEIQMTPVPSPVPH) are disordered. Residues 492-512 (VICNFGILLIMCLIAAIANGI) traverse the membrane as a helical segment. At 513–537 (AWGKTDASLAWFEYGSIGGTPALTG) the chain is on the extracellular side. A helical membrane pass occupies residues 538-558 (FITFWAAVIVFQNLVPISLYI). At 559-1123 (SLEIVRTLQA…TISNFFYKNM (565 aa)) the chain is on the cytoplasmic side. The active-site 4-aspartylphosphate intermediate is Asp-606. ATP is bound by residues Asp-606, Lys-607, Thr-608, Glu-740, Phe-781, Ser-783, Lys-786, Lys-804, Arg-839, Thr-840, Thr-919, Gly-920, Asp-921, Arg-1031, and Lys-1037. Asp-606 serves as a coordination point for Mg(2+). Thr-608 lines the Mg(2+) pocket. A Mg(2+)-binding site is contributed by Asp-1057. The ATP site is built by Asn-1060 and Asp-1061. Asp-1061 serves as a coordination point for Mg(2+). Residues 1124-1144 (IWTWSIFWYQCYCNFDIAYIF) traverse the membrane as a helical segment. The Extracellular segment spans residues 1145–1146 (EY). The helical transmembrane segment at 1147–1167 (TYILMFNLFFTSVPVILMGVL) threads the bilayer. Residues 1168 to 1200 (DQDVSDTVSLAVPQLYRRGIERKEWTQTKFWLY) lie on the Cytoplasmic side of the membrane. The chain crosses the membrane as a helical span at residues 1201–1221 (MIDGVYQSVMSFFIPFIFVVL). At 1222–1237 (TPTAAGNGLDVSERTR) the chain is on the extracellular side. A helical transmembrane segment spans residues 1238 to 1258 (LGAYIAHPAVITINGYILINT). Over 1259–1262 (YRWD) the chain is Cytoplasmic. A helical transmembrane segment spans residues 1263–1283 (WLMLLSIVLSDVFIFFWTGVY). Residues 1284 to 1302 (TATTYSAGFYQAAPQVYQE) lie on the Extracellular side of the membrane. A helical membrane pass occupies residues 1303 to 1323 (LTFWMCLIVTPALCLLPRLVV). Residue Arg-1320 participates in a 1,2-diacyl-sn-glycero-3-phospho-L-serine binding. Residues 1324–1555 (KCIQKQRFPY…EGEPPREPPM (232 aa)) lie on the Cytoplasmic side of the membrane. Disordered regions lie at residues 1364 to 1456 (VEGE…ERTR) and 1489 to 1555 (ESTH…EPPM). The segment covering 1406–1432 (ATHNTRAQNGSDGTTYIMQSRTSTELQ) has biased composition (polar residues). 2 stretches are compositionally biased toward basic and acidic residues: residues 1436 to 1456 (PFDR…ERTR) and 1540 to 1555 (KSID…EPPM).

This sequence belongs to the cation transport ATPase (P-type) (TC 3.A.3) family. Type IV subfamily. Component of a flippase complex consisting of DNF1 and CDC50. Interacts with CDC50; the interaction is direct. Mg(2+) is required as a cofactor.

It localises to the cell membrane. Its subcellular location is the endosome membrane. The protein resides in the golgi apparatus. It is found in the trans-Golgi network membrane. It carries out the reaction ATP + H2O + phospholipidSide 1 = ADP + phosphate + phospholipidSide 2.. The enzyme catalyses a 1,2-diacyl-sn-glycero-3-phosphoethanolamine(out) + ATP + H2O = a 1,2-diacyl-sn-glycero-3-phosphoethanolamine(in) + ADP + phosphate + H(+). The catalysed reaction is a 1,2-diacyl-sn-glycero-3-phosphocholine(out) + ATP + H2O = a 1,2-diacyl-sn-glycero-3-phosphocholine(in) + ADP + phosphate + H(+). It catalyses the reaction a beta-D-glucosyl-(1&lt;-&gt;1')-N-acylsphing-4-enine(out) + ATP + H2O = a beta-D-glucosyl-(1&lt;-&gt;1')-N-acylsphing-4-enine(in) + ADP + phosphate + H(+). It carries out the reaction a 1,2-diacyl-sn-glycero-3-phospho-L-serine(out) + ATP + H2O = a 1,2-diacyl-sn-glycero-3-phospho-L-serine(in) + ADP + phosphate + H(+). Catalytic component of a P4-ATPase flippase complex which catalyzes the hydrolysis of ATP coupled to the transport of phosphatidylcholine and phosphatidylserine from the lumenal to the cytosolic leaflet of membranes and ensures the maintenance of asymmetric distribution of phospholipids. May also transport glucosylceramide and phosphatidylethanolamine. The protein is Phospholipid-transporting ATPase DNF1 of Chaetomium thermophilum (strain DSM 1495 / CBS 144.50 / IMI 039719) (Thermochaetoides thermophila).